The sequence spans 496 residues: Probable histidine ammonia-lyase (496 aa).

Positions 141 to 143 form a cross-link, 5-imidazolinone (Ala-Gly); the sequence is ASG. S142 carries the 2,3-didehydroalanine (Ser) modification.

The protein belongs to the PAL/histidase family. Contains an active site 4-methylidene-imidazol-5-one (MIO), which is formed autocatalytically by cyclization and dehydration of residues Ala-Ser-Gly.

Its subcellular location is the cytoplasm. It catalyses the reaction L-histidine = trans-urocanate + NH4(+). The protein operates within amino-acid degradation; L-histidine degradation into L-glutamate; N-formimidoyl-L-glutamate from L-histidine: step 1/3. This Thermoplasma acidophilum (strain ATCC 25905 / DSM 1728 / JCM 9062 / NBRC 15155 / AMRC-C165) protein is Probable histidine ammonia-lyase.